Consider the following 962-residue polypeptide: Alpha-glucan phosphorylase 1 (962 aa).

The transit peptide at 1–63 directs the protein to the chloroplast; sequence MDTMRISGVS…RSFLSVKSIS (63 aa). Positions 525-552 are disordered; the sequence is AKDAQNGVKTEQEEEKTAGEEEEDEVIP. K808 is modified (N6-(pyridoxal phosphate)lysine).

This sequence belongs to the glycogen phosphorylase family. Requires pyridoxal 5'-phosphate as cofactor.

The protein resides in the plastid. The protein localises to the chloroplast stroma. It catalyses the reaction [(1-&gt;4)-alpha-D-glucosyl](n) + phosphate = [(1-&gt;4)-alpha-D-glucosyl](n-1) + alpha-D-glucose 1-phosphate. In terms of biological role, phosphorylase is an important allosteric enzyme in carbohydrate metabolism. Enzymes from different sources differ in their regulatory mechanisms and in their natural substrates. However, all known phosphorylases share catalytic and structural properties. May be not required for the degradation of starch, but the phosphorolysis of starch may play an important role in water stress tolerance. In Arabidopsis thaliana (Mouse-ear cress), this protein is Alpha-glucan phosphorylase 1 (PHS1).